The primary structure comprises 169 residues: NAD(P)H-quinone oxidoreductase subunit J, chloroplastic (169 aa).

It belongs to the complex I 30 kDa subunit family. In terms of assembly, NDH is composed of at least 16 different subunits, 5 of which are encoded in the nucleus.

It localises to the plastid. Its subcellular location is the chloroplast thylakoid membrane. The catalysed reaction is a plastoquinone + NADH + (n+1) H(+)(in) = a plastoquinol + NAD(+) + n H(+)(out). The enzyme catalyses a plastoquinone + NADPH + (n+1) H(+)(in) = a plastoquinol + NADP(+) + n H(+)(out). In terms of biological role, NDH shuttles electrons from NAD(P)H:plastoquinone, via FMN and iron-sulfur (Fe-S) centers, to quinones in the photosynthetic chain and possibly in a chloroplast respiratory chain. The immediate electron acceptor for the enzyme in this species is believed to be plastoquinone. Couples the redox reaction to proton translocation, and thus conserves the redox energy in a proton gradient. This chain is NAD(P)H-quinone oxidoreductase subunit J, chloroplastic, found in Zygnema circumcarinatum (Green alga).